The primary structure comprises 519 residues: ATP synthase subunit alpha (519 aa).

174 to 181 contacts ATP; it reads GDRQTGKT.

The protein belongs to the ATPase alpha/beta chains family. In terms of assembly, F-type ATPases have 2 components, CF(1) - the catalytic core - and CF(0) - the membrane proton channel. CF(1) has five subunits: alpha(3), beta(3), gamma(1), delta(1), epsilon(1). CF(0) has three main subunits: a(1), b(2) and c(9-12). The alpha and beta chains form an alternating ring which encloses part of the gamma chain. CF(1) is attached to CF(0) by a central stalk formed by the gamma and epsilon chains, while a peripheral stalk is formed by the delta and b chains.

The protein localises to the cell inner membrane. The catalysed reaction is ATP + H2O + 4 H(+)(in) = ADP + phosphate + 5 H(+)(out). Functionally, produces ATP from ADP in the presence of a proton gradient across the membrane. The alpha chain is a regulatory subunit. The polypeptide is ATP synthase subunit alpha (Acidovorax ebreus (strain TPSY) (Diaphorobacter sp. (strain TPSY))).